Reading from the N-terminus, the 89-residue chain is Small ribosomal subunit protein uS17 (89 aa).

This sequence belongs to the universal ribosomal protein uS17 family. As to quaternary structure, part of the 30S ribosomal subunit.

In terms of biological role, one of the primary rRNA binding proteins, it binds specifically to the 5'-end of 16S ribosomal RNA. This is Small ribosomal subunit protein uS17 from Acidovorax ebreus (strain TPSY) (Diaphorobacter sp. (strain TPSY)).